A 186-amino-acid chain; its full sequence is Translation initiation factor IF-3 (186 aa).

The protein belongs to the IF-3 family. Monomer.

Its subcellular location is the cytoplasm. Its function is as follows. IF-3 binds to the 30S ribosomal subunit and shifts the equilibrium between 70S ribosomes and their 50S and 30S subunits in favor of the free subunits, thus enhancing the availability of 30S subunits on which protein synthesis initiation begins. The protein is Translation initiation factor IF-3 of Borreliella afzelii (strain PKo) (Borrelia afzelii).